Here is a 156-residue protein sequence, read N- to C-terminus: 6,7-dimethyl-8-ribityllumazine synthase (156 aa).

5-amino-6-(D-ribitylamino)uracil contacts are provided by residues W28, 60-62 (SFE), and 82-84 (VVV). 87-88 (GT) is a (2S)-2-hydroxy-3-oxobutyl phosphate binding site. The Proton donor role is filled by H90. F115 contacts 5-amino-6-(D-ribitylamino)uracil. Residue R129 coordinates (2S)-2-hydroxy-3-oxobutyl phosphate.

It belongs to the DMRL synthase family.

It catalyses the reaction (2S)-2-hydroxy-3-oxobutyl phosphate + 5-amino-6-(D-ribitylamino)uracil = 6,7-dimethyl-8-(1-D-ribityl)lumazine + phosphate + 2 H2O + H(+). It participates in cofactor biosynthesis; riboflavin biosynthesis; riboflavin from 2-hydroxy-3-oxobutyl phosphate and 5-amino-6-(D-ribitylamino)uracil: step 1/2. In terms of biological role, catalyzes the formation of 6,7-dimethyl-8-ribityllumazine by condensation of 5-amino-6-(D-ribitylamino)uracil with 3,4-dihydroxy-2-butanone 4-phosphate. This is the penultimate step in the biosynthesis of riboflavin. In Kocuria rhizophila (strain ATCC 9341 / DSM 348 / NBRC 103217 / DC2201), this protein is 6,7-dimethyl-8-ribityllumazine synthase.